The following is a 71-amino-acid chain: Small ribosomal subunit protein bS21 (71 aa).

It belongs to the bacterial ribosomal protein bS21 family.

This chain is Small ribosomal subunit protein bS21, found in Psychromonas ingrahamii (strain DSM 17664 / CCUG 51855 / 37).